The sequence spans 580 residues: Probable inactive 1-aminocyclopropane-1-carboxylate synthase-like protein 2 (580 aa).

Residues 1–43 form a disordered region; sequence MSENRNEGSSQAAKANSDTQTPSHFKVTHPRLRDQLKKKSSKK. Residues 7 to 23 show a composition bias toward polar residues; sequence EGSSQAAKANSDTQTPS. Lys417 bears the N6-(pyridoxal phosphate)lysine mark.

Belongs to the class-I pyridoxal-phosphate-dependent aminotransferase family.

This chain is Probable inactive 1-aminocyclopropane-1-carboxylate synthase-like protein 2 (Accsl), found in Mus musculus (Mouse).